A 547-amino-acid polypeptide reads, in one-letter code: bZIP transcription factor 29 (547 aa).

3 disordered regions span residues 1 to 199 (MGDT…SGGE), 244 to 312 (NSSE…DIAP), and 333 to 356 (GDES…TNSV). Positions 15–52 (LHSSFGTTSSSIPKNPISQLDLNPNFIRSSAPQFSKPF) are enriched in polar residues. A compositionally biased stretch (pro residues) spans 63-73 (PSHPNLIPPTS). Polar residues predominate over residues 74-89 (PFSQIPTTRQPGSHNF). A compositionally biased stretch (basic and acidic residues) spans 120 to 132 (FRDHDVSMEDRDS). Residues 134 to 157 (VFNSNHSLPPSPFTRCNSTSSSSL) show a composition bias toward polar residues. A compositionally biased stretch (basic and acidic residues) spans 249–263 (DDSKNGNENRDDMES). Positions 264 to 275 (SRASGTKTNGSD) are enriched in polar residues. Over residues 279–294 (ESSSVNESANNNMNSS) the composition is skewed to low complexity. A compositionally biased stretch (polar residues) spans 344 to 356 (GSMSRKVSPTNSV). Positions 394–457 (DPKRVKRILA…MGLTNQNNEL (64 aa)) constitute a bZIP domain. Residues 396–417 (KRVKRILANRQSAARSKERKMR) are basic motif. A coiled-coil region spans residues 416 to 469 (MRYIVELEHKVQTLQTEATTLSAQLTLLQRDMMGLTNQNNELKFRLQAMEQQAR). The interval 422–457 (LEHKVQTLQTEATTLSAQLTLLQRDMMGLTNQNNEL) is leucine-zipper. Positions 517–535 (QLRQQPQQMQQQSHQQNHQ) are enriched in low complexity. The segment at 517-547 (QLRQQPQQMQQQSHQQNHQNGTMATKSESNE) is disordered. A compositionally biased stretch (polar residues) spans 536–547 (NGTMATKSESNE).

In terms of assembly, forms homodimers. As to expression, expressed in roots, leaves and flowers. Expressed in the root tips, lateral root primordia, and guard cells of leaves, hypocotyls and anthers.

Its subcellular location is the cytoplasm. The protein resides in the nucleus. Its function is as follows. Transcription factor that acts as a repressor of reproductive development, meristem size and plant growth. Regulates meristem size, cell size and cell number during plant development. Binds to the promoters of the cell cycle regulators CYCB1-2 and SMR4, and genes involved in cell wall organization, such as XTH9, EXPA1 and EXPA3. Possesses transactivation activity in yeast. Possesses transactivation activity in plant protoplasts. Plays a role in abiotic stress response by binding to the 5'-CAGCTG-3' DNA sequence found in the promoters of MYB44 and TRX8. Plays a role in osmosensory response by binding to the 5'-AGCTGT/G-3' DNA sequence found in the promoters of the hypoosmolarity-responsive genes CYP707A1 and CYP707A3. Binds to the 5'-AGCTGT-3' DNA sequence found in the promoter of the ZAT1 gene in response to abiotic stresses, such as oxidative stress, high-light, osmotic shock, salt and heat stresses. The polypeptide is bZIP transcription factor 29 (Arabidopsis thaliana (Mouse-ear cress)).